The chain runs to 668 residues: Break repair meiotic recombinase recruitment factor 1 (668 aa).

5 disordered regions span residues methionine 1 to proline 142, leucine 155 to serine 333, leucine 349 to asparagine 465, valine 482 to aspartate 521, and leucine 642 to leucine 668. The span at threonine 114–glycine 125 shows a compositional bias: basic and acidic residues. Polar residues predominate over residues glutamine 166 to valine 180. The span at serine 208–alanine 251 shows a compositional bias: basic and acidic residues. Over residues threonine 279 to serine 296 the composition is skewed to low complexity. The span at alanine 305–serine 316 shows a compositional bias: polar residues. Phosphoserine is present on serine 370. Residues threonine 391–glutamate 400 show a composition bias toward low complexity.

In terms of assembly, interacts with HSF2BP (via N-terminus) and BRCA2; the interaction with HSF2BP is direct and allows the formation of a ternary complex. The complex BRME1:HSF2BP:BRCA2 interacts with SPATA22, MEIOB and RAD51.

Its subcellular location is the chromosome. In terms of biological role, meiotic recombination factor component of recombination bridges involved in meiotic double-strand break repair. Modulates the localization of recombinases DMC1:RAD51 to meiotic double-strand break (DSB) sites through the interaction with and stabilization of the BRCA2:HSF2BP complex during meiotic recombination. Indispensable for the DSB repair, homologous synapsis, and crossover formation that are needed for progression past metaphase I, is essential for spermatogenesis and male fertility. The polypeptide is Break repair meiotic recombinase recruitment factor 1 (Homo sapiens (Human)).